Here is a 162-residue protein sequence, read N- to C-terminus: Putative 4-hydroxy-4-methyl-2-oxoglutarate aldolase (162 aa).

Substrate contacts are provided by residues glycine 75 to leucine 78 and arginine 97. Aspartate 98 lines the a divalent metal cation pocket.

The protein belongs to the class II aldolase/RraA-like family. In terms of assembly, homotrimer. A divalent metal cation serves as cofactor.

It carries out the reaction 4-hydroxy-4-methyl-2-oxoglutarate = 2 pyruvate. The enzyme catalyses oxaloacetate + H(+) = pyruvate + CO2. In terms of biological role, catalyzes the aldol cleavage of 4-hydroxy-4-methyl-2-oxoglutarate (HMG) into 2 molecules of pyruvate. Also contains a secondary oxaloacetate (OAA) decarboxylase activity due to the common pyruvate enolate transition state formed following C-C bond cleavage in the retro-aldol and decarboxylation reactions. In Ectopseudomonas mendocina (strain ymp) (Pseudomonas mendocina), this protein is Putative 4-hydroxy-4-methyl-2-oxoglutarate aldolase.